We begin with the raw amino-acid sequence, 296 residues long: tRNA dimethylallyltransferase (296 aa).

2–9 (GPTASGKT) provides a ligand contact to ATP. Substrate is bound at residue 4–9 (TASGKT). 3 interaction with substrate tRNA regions span residues 27–30 (DSAL), 151–155 (QRLSR), and 232–237 (RCVGYR).

It belongs to the IPP transferase family. As to quaternary structure, monomer. Requires Mg(2+) as cofactor.

It carries out the reaction adenosine(37) in tRNA + dimethylallyl diphosphate = N(6)-dimethylallyladenosine(37) in tRNA + diphosphate. Catalyzes the transfer of a dimethylallyl group onto the adenine at position 37 in tRNAs that read codons beginning with uridine, leading to the formation of N6-(dimethylallyl)adenosine (i(6)A). In Shewanella woodyi (strain ATCC 51908 / MS32), this protein is tRNA dimethylallyltransferase.